Reading from the N-terminus, the 501-residue chain is Cytochrome P450 monooxygenase 76AD131 (501 aa).

The chain crosses the membrane as a helical span at residues 1 to 21 (MGYYAIFAVVLPFLWTCFYLL). 2 N-linked (GlcNAc...) asparagine glycosylation sites follow: Asn115 and Asn264. Residue Cys444 participates in heme binding.

It belongs to the cytochrome P450 family. It depends on heme as a cofactor. As to expression, highly expressed in aerial parts, in both skin and flesh tissues.

The protein localises to the membrane. The enzyme catalyses tyramine + reduced [NADPH--hemoprotein reductase] + O2 = dopamine + oxidized [NADPH--hemoprotein reductase] + H2O + H(+). It carries out the reaction 3-methoxytyramine + reduced [NADPH--hemoprotein reductase] + O2 = 3,4-dihydroxy-5-methoxyphenethylamine + oxidized [NADPH--hemoprotein reductase] + H2O + H(+). The protein operates within aromatic compound metabolism. It functions in the pathway alkaloid biosynthesis. In terms of biological role, cytochrome P450 monooxygenase participating in the biosynthesis of natural products derived from phenylethylamine, including mescaline, a natural hallucinogen potentially used in psychotherapeutic treatments. Catalyzes the hydroxylation of tyramine to dopamine and of 3-methoxytyramine to 3,4-dihydroxy-5-methoxyphenethylamine. This Lophophora williamsii (Peyote) protein is Cytochrome P450 monooxygenase 76AD131.